A 169-amino-acid polypeptide reads, in one-letter code: Hydroperoxy fatty acid reductase gpx1 (169 aa).

The active site involves C41.

This sequence belongs to the glutathione peroxidase family. As to quaternary structure, monomer.

It carries out the reaction a hydroperoxy polyunsaturated fatty acid + NADPH + H(+) = a hydroxy polyunsaturated fatty acid + NADP(+) + H2O. Mercaptosuccinate, pCMB, and nethylmaleimide act as inhibitors of the catalytic activity. Its function is as follows. Hydroperoxy fatty acid reductase essential for the removal of lipid hydroperoxides under normal and stress conditions, leading to the protection of membrane integrity. The sequence is that of Hydroperoxy fatty acid reductase gpx1 (gpx1) from Synechocystis sp. (strain ATCC 27184 / PCC 6803 / Kazusa).